The sequence spans 502 residues: Maturase K (502 aa).

The protein belongs to the intron maturase 2 family. MatK subfamily.

It is found in the plastid. It localises to the chloroplast. Its function is as follows. Usually encoded in the trnK tRNA gene intron. Probably assists in splicing its own and other chloroplast group II introns. The polypeptide is Maturase K (Spiraea cantoniensis (Reeve's meadowsweet)).